The following is a 132-amino-acid chain: Small ribosomal subunit protein uS11 (132 aa).

The protein belongs to the universal ribosomal protein uS11 family. Part of the 30S ribosomal subunit. Interacts with proteins S7 and S18. Binds to IF-3.

Located on the platform of the 30S subunit, it bridges several disparate RNA helices of the 16S rRNA. Forms part of the Shine-Dalgarno cleft in the 70S ribosome. In Cupriavidus pinatubonensis (strain JMP 134 / LMG 1197) (Cupriavidus necator (strain JMP 134)), this protein is Small ribosomal subunit protein uS11.